An 87-amino-acid polypeptide reads, in one-letter code: Small ribosomal subunit protein uS17 (87 aa).

The protein belongs to the universal ribosomal protein uS17 family. Part of the 30S ribosomal subunit.

One of the primary rRNA binding proteins, it binds specifically to the 5'-end of 16S ribosomal RNA. This chain is Small ribosomal subunit protein uS17, found in Lacticaseibacillus casei (strain BL23) (Lactobacillus casei).